Here is a 222-residue protein sequence, read N- to C-terminus: Nucleoside triphosphate pyrophosphatase (222 aa).

Residue Asp-82 is the Proton acceptor of the active site.

The protein belongs to the Maf family. Requires a divalent metal cation as cofactor.

It is found in the cytoplasm. The catalysed reaction is a ribonucleoside 5'-triphosphate + H2O = a ribonucleoside 5'-phosphate + diphosphate + H(+). It carries out the reaction a 2'-deoxyribonucleoside 5'-triphosphate + H2O = a 2'-deoxyribonucleoside 5'-phosphate + diphosphate + H(+). Its function is as follows. Nucleoside triphosphate pyrophosphatase. May have a dual role in cell division arrest and in preventing the incorporation of modified nucleotides into cellular nucleic acids. The sequence is that of Nucleoside triphosphate pyrophosphatase from Mycobacterium bovis (strain ATCC BAA-935 / AF2122/97).